The following is an 826-amino-acid chain: Eukaryotic translation initiation factor 3 subunit C (826 aa).

Disordered stretches follow at residues 1–71 (MSRF…GKGA) and 205–227 (SGGD…PRAK). The span at 10 to 20 (DSDDSSSDEDL) shows a compositional bias: acidic residues. Low complexity predominate over residues 21–30 (YGSGSESGSD). Positions 32–65 (SQDEQDGGDDNDDDMSDDSMFADDSDDDSDDDED) are enriched in acidic residues. The segment covering 218–227 (KEDKPKPRAK) has biased composition (basic and acidic residues). Residues 605–779 (FHTHINLELL…NSVVFTQAVQ (175 aa)) form the PCI domain.

Belongs to the eIF-3 subunit C family. As to quaternary structure, component of the eukaryotic translation initiation factor 3 (eIF-3) complex.

It localises to the cytoplasm. In terms of biological role, component of the eukaryotic translation initiation factor 3 (eIF-3) complex, which is involved in protein synthesis of a specialized repertoire of mRNAs and, together with other initiation factors, stimulates binding of mRNA and methionyl-tRNAi to the 40S ribosome. The eIF-3 complex specifically targets and initiates translation of a subset of mRNAs involved in cell proliferation. The polypeptide is Eukaryotic translation initiation factor 3 subunit C (Yarrowia lipolytica (strain CLIB 122 / E 150) (Yeast)).